A 356-amino-acid chain; its full sequence is Tyrosine recombinase XerS (356 aa).

The Core-binding (CB) domain maps to 16-121; it reads IMPWYVLDYY…ALSSLYKYLT (106 aa). Residues 169-354 form the Tyr recombinase domain; it reads AFLDYVDKEY…VNDEQKTALD (186 aa). Active-site residues include Arg-210, Lys-234, His-306, Arg-309, and His-332. Tyr-341 acts as the O-(3'-phospho-DNA)-tyrosine intermediate in catalysis.

It belongs to the 'phage' integrase family. XerS subfamily.

It is found in the cytoplasm. FtsK is required for recombination. In terms of biological role, site-specific tyrosine recombinase, which acts by catalyzing the cutting and rejoining of the recombining DNA molecules. Essential to convert dimers of the bacterial chromosome into monomers to permit their segregation at cell division. The polypeptide is Tyrosine recombinase XerS (Streptococcus pyogenes serotype M12 (strain MGAS9429)).